Here is a 277-residue protein sequence, read N- to C-terminus: Shikimate dehydrogenase (NADP(+)) (277 aa).

Shikimate-binding positions include 18–20 and T65; that span reads SKS. Residue K69 is the Proton acceptor of the active site. Position 81 (E81) interacts with NADP(+). Positions 90 and 106 each coordinate shikimate. Residues 130-134, 154-159, and M217 contribute to the NADP(+) site; these read GAGGA and NRTFSK. Residue Y219 participates in shikimate binding. G241 is a binding site for NADP(+).

It belongs to the shikimate dehydrogenase family. As to quaternary structure, homodimer.

The enzyme catalyses shikimate + NADP(+) = 3-dehydroshikimate + NADPH + H(+). It functions in the pathway metabolic intermediate biosynthesis; chorismate biosynthesis; chorismate from D-erythrose 4-phosphate and phosphoenolpyruvate: step 4/7. Its function is as follows. Involved in the biosynthesis of the chorismate, which leads to the biosynthesis of aromatic amino acids. Catalyzes the reversible NADPH linked reduction of 3-dehydroshikimate (DHSA) to yield shikimate (SA). The polypeptide is Shikimate dehydrogenase (NADP(+)) (Vibrio parahaemolyticus serotype O3:K6 (strain RIMD 2210633)).